A 115-amino-acid chain; its full sequence is Procyclic form-specific polypeptide (115 aa).

A signal peptide spans 1-27; the sequence is MAPRSLYLLAVLLFSANLFAGVGFAAA. The disordered stretch occupies residues 27 to 97; that stretch reads AAEGPEDKGL…PEPEPGAATL (71 aa). Basic and acidic residues predominate over residues 31 to 52; sequence PEDKGLTKGGKGKGEKGTKVGA. The N-linked (GlcNAc...) asparagine glycan is linked to N56. Repeat copies occupy residues 59–60, 61–62, 63–64, 65–66, 67–68, 69–70, 71–72, 73–74, 75–76, 77–78, 79–80, 81–82, 83–84, 85–86, 87–88, 89–90, and 91–92. The 17 X 2 AA tandem repeats of [DE]-P stretch occupies residues 59 to 92; it reads DPDPEPEPEPEPEPEPEPEPEPEPEPEPEPEPEP. Over residues 60–90 the composition is skewed to acidic residues; the sequence is PDPEPEPEPEPEPEPEPEPEPEPEPEPEPEP. G93 carries the GPI-anchor amidated glycine lipid modification. A propeptide spans 94 to 115 (removed in mature form); sequence AATLKSVALPFAIAAAALVAAF.

The protein resides in the cell membrane. In terms of biological role, major surface antigen of procyclic forms. The polypeptide is Procyclic form-specific polypeptide (PROA) (Trypanosoma brucei brucei).